The sequence spans 757 residues: RNA-directed RNA polymerase catalytic subunit (757 aa).

The interval 56–78 (TTNTETGAHQLNPIDGPLPEDNE) is disordered. Short sequence motifs (nuclear localization signal) lie at residues 187-195 (RKRRVRDNM) and 203-216 (RTIG…NKRS). Residues 249–256 (RGFVYFVE) form a promoter-binding site region. The 198-residue stretch at 286–483 (VRKMMTNSQD…GINMSKKKSY (198 aa)) folds into the RdRp catalytic domain.

The protein belongs to the influenza viruses polymerase PB1 family. As to quaternary structure, influenza RNA polymerase is composed of three subunits: PB1, PB2 and PA. Interacts (via N-terminus) with PA (via C-terminus). Interacts (via C-terminus) with PB2 (via N-terminus); this interaction is essential for transcription initiation. Phosphorylated by host PRKCA.

The protein localises to the host nucleus. It is found in the host cytoplasm. It carries out the reaction RNA(n) + a ribonucleoside 5'-triphosphate = RNA(n+1) + diphosphate. Functionally, RNA-dependent RNA polymerase which is responsible for replication and transcription of virus RNA segments. The transcription of viral mRNAs occurs by a unique mechanism called cap-snatching. 5' methylated caps of cellular mRNAs are cleaved after 10-13 nucleotides by PA. In turn, these short capped RNAs are used as primers by PB1 for transcription of viral mRNAs. During virus replication, PB1 initiates RNA synthesis and copy vRNA into complementary RNA (cRNA) which in turn serves as a template for the production of more vRNAs. The polypeptide is RNA-directed RNA polymerase catalytic subunit (Aves (Human)).